Consider the following 540-residue polypeptide: L-aspartate oxidase (540 aa).

FAD-binding positions include 16–19 (SGAA), lysine 38, 45–52 (STFYAQGG), and aspartate 223. Arginine 290 serves as the catalytic Proton donor/acceptor. FAD-binding positions include glutamate 375 and 391–392 (SL).

Belongs to the FAD-dependent oxidoreductase 2 family. NadB subfamily. The cofactor is FAD.

The protein localises to the cytoplasm. The enzyme catalyses L-aspartate + O2 = iminosuccinate + H2O2. It participates in cofactor biosynthesis; NAD(+) biosynthesis; iminoaspartate from L-aspartate (oxidase route): step 1/1. Functionally, catalyzes the oxidation of L-aspartate to iminoaspartate, the first step in the de novo biosynthesis of NAD(+). The protein is L-aspartate oxidase (nadB) of Salmonella typhimurium (strain LT2 / SGSC1412 / ATCC 700720).